Consider the following 110-residue polypeptide: Insulin (110 aa).

The N-terminal stretch at 1 to 24 is a signal peptide; that stretch reads MALWMRLLPLLALLALWGPDPVPA. 3 cysteine pairs are disulfide-bonded: C31–C96, C43–C109, and C95–C100. The propeptide at 57–87 is c peptide; that stretch reads EAEDPQVGQVELGGGPGAGSLQPLALEGSLQ.

The protein belongs to the insulin family. Heterodimer of a B chain and an A chain linked by two disulfide bonds.

Its subcellular location is the secreted. Its function is as follows. Insulin decreases blood glucose concentration. It increases cell permeability to monosaccharides, amino acids and fatty acids. It accelerates glycolysis, the pentose phosphate cycle, and glycogen synthesis in liver. The protein is Insulin (INS) of Chlorocebus aethiops (Green monkey).